Reading from the N-terminus, the 143-residue chain is Endoribonuclease YbeY (143 aa).

Positions 111, 115, and 121 each coordinate Zn(2+).

The protein belongs to the endoribonuclease YbeY family. Zn(2+) is required as a cofactor.

The protein localises to the cytoplasm. Single strand-specific metallo-endoribonuclease involved in late-stage 70S ribosome quality control and in maturation of the 3' terminus of the 16S rRNA. The protein is Endoribonuclease YbeY of Cytophaga hutchinsonii (strain ATCC 33406 / DSM 1761 / CIP 103989 / NBRC 15051 / NCIMB 9469 / D465).